Reading from the N-terminus, the 275-residue chain is Phosphonoacetaldehyde hydrolase (275 aa).

Residue Asp15 is the Nucleophile of the active site. Residues Asp15 and Ala17 each contribute to the Mg(2+) site. Lys56 (schiff-base intermediate with substrate) is an active-site residue. Asp189 serves as a coordination point for Mg(2+).

It belongs to the HAD-like hydrolase superfamily. PhnX family. In terms of assembly, homodimer. The cofactor is Mg(2+).

It catalyses the reaction phosphonoacetaldehyde + H2O = acetaldehyde + phosphate + H(+). In terms of biological role, involved in phosphonate degradation. The protein is Phosphonoacetaldehyde hydrolase of Pseudomonas putida (strain ATCC 700007 / DSM 6899 / JCM 31910 / BCRC 17059 / LMG 24140 / F1).